Here is a 1073-residue protein sequence, read N- to C-terminus: Probable inorganic carbon transporter subunit DabA 2 (1073 aa).

Over residues 1–20 the composition is skewed to polar residues; the sequence is MSSGNTSSQNHSPVNNQPTR. The disordered stretch occupies residues 1–35; it reads MSSGNTSSQNHSPVNNQPTRLKSPLPALHKDTQPN. The Zn(2+) site is built by C535, D537, H721, and C736.

Belongs to the inorganic carbon transporter (TC 9.A.2) DabA family. As to quaternary structure, forms a complex with DabB. Zn(2+) is required as a cofactor.

Its subcellular location is the cell inner membrane. Part of an energy-coupled inorganic carbon pump. The protein is Probable inorganic carbon transporter subunit DabA 2 of Rhodopirellula baltica (strain DSM 10527 / NCIMB 13988 / SH1).